Reading from the N-terminus, the 689-residue chain is Glycine--tRNA ligase beta subunit (689 aa).

It belongs to the class-II aminoacyl-tRNA synthetase family. Tetramer of two alpha and two beta subunits.

The protein resides in the cytoplasm. It catalyses the reaction tRNA(Gly) + glycine + ATP = glycyl-tRNA(Gly) + AMP + diphosphate. The chain is Glycine--tRNA ligase beta subunit from Shewanella putrefaciens (strain CN-32 / ATCC BAA-453).